The following is a 764-amino-acid chain: Complement factor B (764 aa).

The first 25 residues, 1 to 25 (MGSNLSPQLCLMPFILGLLSGGVTT), serve as a signal peptide directing secretion. Sushi domains follow at residues 35 to 100 (GSCS…ECRA), 101 to 160 (IHCP…ICDN), and 163 to 220 (GYCS…SCQD). Intrachain disulfides connect Cys37-Cys76, Cys62-Cys98, Cys103-Cys145, Cys131-Cys158, Cys165-Cys205, and Cys191-Cys218. 2 N-linked (GlcNAc...) asparagine glycosylation sites follow: Asn122 and Asn142. The VWFA domain occupies 270–469 (NIYLVLDGSD…NLEDVFYQMI (200 aa)). Residues Ser278 and Ser280 each coordinate Mg(2+). Asn285 carries an N-linked (GlcNAc...) asparagine glycan. Thr353 is a Mg(2+) binding site. A glycan (N-linked (GlcNAc...) asparagine) is linked at Asn378. The Peptidase S1 domain occupies 477–757 (LCGMVWEHRK…VLPWLKEKLQ (281 aa)). Intrachain disulfides connect Cys478–Cys596, Cys511–Cys527, Cys599–Cys615, Cys656–Cys682, and Cys695–Cys725. Residues His526 and Asp576 each act as charge relay system in the active site. Ser699 acts as the Charge relay system in catalysis.

It belongs to the peptidase S1 family. As to quaternary structure, monomer. Interacts with complement C3b; this interaction is dependent on the presence of Mg(2+). In terms of assembly, catalytic component of the C3 convertase of the alternative complement pathway, also named C3bBb, composed of complement factor B Bb and complement C3b. Catalytic component of the C5 convertase of the alternative complement pathway, also named C3bBb3b, composed of complement factor B Bb and additional molecules of complement C3b. Interacts to CFP; this interaction contributes to the stabilization of the active C3-convertase enzyme complex. It depends on Mg(2+) as a cofactor. Mn(2+) serves as cofactor. Cleaved by CFD following activation of the alternative complement system, generating Ba and Bb chains. Cleavage and activation takes place when CFB is already associated with complement C3b.

Its subcellular location is the secreted. It is found in the cell surface. It carries out the reaction Cleavage of Arg-|-Ser bond in complement component C3 alpha-chain to yield C3a and C3b, and Arg-|-Xaa bond in complement component C5 alpha-chain to yield C5a and C5b.. Its function is as follows. Precursor of the catalytic component of the C3 and C5 convertase complexes of the alternative pathway of the complement system, a cascade of proteins that leads to phagocytosis and breakdown of pathogens and signaling that strengthens the adaptive immune system. The alternative complement pathway acts as an amplification loop that enhances other complement pathways (classical, lectin and GZMK) by promoting formation of additional C3 and C5 convertases. CFB is cleaved and activated by CFD to generate Ba and Bb chains; Bb chain constituting the catalytic component of the C3 and C5 convertases. In terms of biological role, serine protease component of the complement C3 and C5 convertase complexes of the alternative complement pathway. Following cleavage and activation by factor D (CFD), forms the C3 convertase together with complement C3b. As part of the C3 convertase, cleaves and activates C3 into C3a anaphylatoxin and C3b opsonin, the next components of the complement pathways. When an additional complement C3b molecule binds to the C3 convertase, forms the C5 convertase, which cleaves and activates C5 into C5a anaphylatoxin and C5b component of the membrane attack complex. Involved in proliferation and differentiation of preactivated B-lymphocytes, rapid spreading of peripheral blood monocytes, stimulation of lymphocyte blastogenesis and lysis of erythrocytes. The protein is Complement factor B (CFB) of Gorilla gorilla gorilla (Western lowland gorilla).